A 2144-amino-acid polypeptide reads, in one-letter code: Cadherin EGF LAG seven-pass G-type receptor 2 (2144 aa).

Cadherin domains are found at residues glutamate 1 to phenylalanine 40, leucine 41 to phenylalanine 146, glutamate 147 to leucine 248, and isoleucine 253 to leucine 371. The Extracellular segment spans residues glutamate 1–threonine 1605. 4 N-linked (GlcNAc...) asparagine glycosylation sites follow: asparagine 261, asparagine 301, asparagine 407, and asparagine 437. Positions aspartate 453–glutamate 511 constitute an EGF-like 1; calcium-binding domain. 9 cysteine pairs are disulfide-bonded: cysteine 457–cysteine 468, cysteine 462–cysteine 499, cysteine 501–cysteine 510, cysteine 517–cysteine 528, cysteine 522–cysteine 537, cysteine 539–cysteine 548, cysteine 557–cysteine 568, cysteine 562–cysteine 578, and cysteine 580–cysteine 590. Residues glutamate 513 to glutamate 549 enclose the EGF-like 2; calcium-binding domain. Residues arginine 553–glutamine 591 form the EGF-like 3; calcium-binding domain. The Laminin G-like 1 domain occupies valine 592–cysteine 796. 2 N-linked (GlcNAc...) asparagine glycosylation sites follow: asparagine 726 and asparagine 790. 4 cysteine pairs are disulfide-bonded: cysteine 770–cysteine 796, cysteine 803–cysteine 814, cysteine 808–cysteine 823, and cysteine 825–cysteine 834. The region spanning lysine 799–alanine 835 is the EGF-like 4; calcium-binding domain. (3R)-3-hydroxyasparagine is present on asparagine 816. The Laminin G-like 2 domain maps to alanine 839–cysteine 1016. Asparagine 966 carries N-linked (GlcNAc...) asparagine glycosylation. 14 cysteine pairs are disulfide-bonded: cysteine 986–cysteine 1016, cysteine 1022–cysteine 1033, cysteine 1027–cysteine 1042, cysteine 1044–cysteine 1053, cysteine 1057–cysteine 1068, cysteine 1062–cysteine 1080, cysteine 1082–cysteine 1091, cysteine 1112–cysteine 1124, cysteine 1114–cysteine 1131, cysteine 1133–cysteine 1146, cysteine 1149–cysteine 1161, cysteine 1151–cysteine 1168, cysteine 1170–cysteine 1179, and cysteine 1182–cysteine 1194. One can recognise an EGF-like 5; calcium-binding domain in the interval tryptophan 1018 to cysteine 1053. Asparagine 1035 is subject to (3R)-3-hydroxyasparagine. The N-linked (GlcNAc...) asparagine glycan is linked to asparagine 1052. Residues threonine 1054–glutamate 1092 enclose the EGF-like 6; calcium-binding domain. Residues threonine 1108–leucine 1147 form the EGF-like 7; calcium-binding domain. Residue asparagine 1125 is glycosylated (N-linked (GlcNAc...) asparagine). One can recognise a Laminin EGF-like domain in the interval cysteine 1149–valine 1196. 3 N-linked (GlcNAc...) asparagine glycosylation sites follow: asparagine 1249, asparagine 1268, and asparagine 1286. A GAIN-B domain is found at glutamate 1424–glutamate 1594. A disordered region spans residues proline 1439–serine 1466. 2 cysteine pairs are disulfide-bonded: cysteine 1544-cysteine 1576 and cysteine 1564-cysteine 1578. The segment at cysteine 1544 to glutamate 1594 is GPS. Residues asparagine 1548 and asparagine 1570 are each glycosylated (N-linked (GlcNAc...) asparagine). Residues tyrosine 1606–leucine 1626 traverse the membrane as a helical segment. The Cytoplasmic segment spans residues arginine 1627–threonine 1641. A helical membrane pass occupies residues alanine 1642 to phenylalanine 1662. A topological domain (extracellular) is located at residue alanine 1663. Residues cysteine 1664–leucine 1684 form a helical membrane-spanning segment. At glutamate 1685–arginine 1705 the chain is on the cytoplasmic side. The helical transmembrane segment at phenylalanine 1706–aspartate 1726 threads the bilayer. Topologically, residues proline 1727–leucine 1744 are extracellular. The helical transmembrane segment at isoleucine 1745–leucine 1765 threads the bilayer. The Cytoplasmic segment spans residues serine 1766–serine 1789. A helical membrane pass occupies residues serine 1790–serine 1810. The Extracellular segment spans residues aspartate 1811 to histidine 1816. A helical membrane pass occupies residues tyrosine 1817–leucine 1837. Over serine 1838 to histidine 2144 the chain is Cytoplasmic. A disordered region spans residues threonine 1914–leucine 2109. Positions threonine 1943–glutamine 1955 are enriched in acidic residues. A compositionally biased stretch (polar residues) spans glycine 2016–serine 2025. Basic and acidic residues predominate over residues leucine 2028 to threonine 2040. A compositionally biased stretch (polar residues) spans glycine 2082 to serine 2095.

The protein belongs to the G-protein coupled receptor 2 family. LN-TM7 subfamily. As to quaternary structure, heterodimer of 2 chains generated by proteolytic processing; the large extracellular N-terminal fragment and the membrane-bound C-terminal fragment predominantly remain associated and non-covalently linked. Post-translationally, the iron and 2-oxoglutarate dependent 3-hydroxylation of aspartate and asparagine is (R) stereospecific within EGF domains. Autoproteolytically processed at the GPS region of the GAIN-B domain; this cleavage modulates receptor activity. In terms of tissue distribution, expressed in the brain. High expression in cerebellum and olfactory bulb. Weaker expression in cerebral cortex, hippocampus and brain stem.

The protein localises to the cell membrane. Its function is as follows. Receptor that may have an important role in cell/cell signaling during nervous system formation. This Rattus norvegicus (Rat) protein is Cadherin EGF LAG seven-pass G-type receptor 2.